Consider the following 240-residue polypeptide: ATP-dependent dethiobiotin synthetase BioD (240 aa).

13–18 (EVGKTV) contacts ATP. Mg(2+) is bound at residue threonine 17. Lysine 38 is an active-site residue. Position 42 (serine 42) interacts with substrate. Residues aspartate 55, 116–119 (EGAG), 176–177 (ND), and 205–207 (PWL) contribute to the ATP site. Residues aspartate 55 and glutamate 116 each coordinate Mg(2+).

This sequence belongs to the dethiobiotin synthetase family. As to quaternary structure, homodimer. Mg(2+) serves as cofactor.

The protein localises to the cytoplasm. It catalyses the reaction (7R,8S)-7,8-diammoniononanoate + CO2 + ATP = (4R,5S)-dethiobiotin + ADP + phosphate + 3 H(+). It functions in the pathway cofactor biosynthesis; biotin biosynthesis; biotin from 7,8-diaminononanoate: step 1/2. Catalyzes a mechanistically unusual reaction, the ATP-dependent insertion of CO2 between the N7 and N8 nitrogen atoms of 7,8-diaminopelargonic acid (DAPA, also called 7,8-diammoniononanoate) to form a ureido ring. This is ATP-dependent dethiobiotin synthetase BioD from Pseudescherichia vulneris (Escherichia vulneris).